The following is a 391-amino-acid chain: Heme A synthase (391 aa).

The next 8 helical transmembrane spans lie at 37–57 (IRLWLMALFLLVMAMIVVGGL), 121–141 (RQLGRVIGLVWAVGFLGFLAA), 152–172 (LLALGALGGLQGGIGWWMVAS), 186–206 (LATHLGLAFIILGLIAWQALL), 229–249 (TTVLIGVAFLQIVLGALVAGI), 298–318 (FLHRMAGYALAALGLIFWIFG), 332–352 (LLAMALLAQILLGVGTVLSAA), and 354–374 (WQVAIAHQVGAVVIWVLILHA). His300 contacts heme. Position 360 (His360) interacts with heme.

The protein belongs to the COX15/CtaA family. Type 2 subfamily. Interacts with CtaB. Requires heme b as cofactor.

The protein resides in the cell membrane. It catalyses the reaction Fe(II)-heme o + 2 A + H2O = Fe(II)-heme a + 2 AH2. It participates in porphyrin-containing compound metabolism; heme A biosynthesis; heme A from heme O: step 1/1. Functionally, catalyzes the conversion of heme O to heme A by two successive hydroxylations of the methyl group at C8. The first hydroxylation forms heme I, the second hydroxylation results in an unstable dihydroxymethyl group, which spontaneously dehydrates, resulting in the formyl group of heme A. The sequence is that of Heme A synthase from Cereibacter sphaeroides (strain KD131 / KCTC 12085) (Rhodobacter sphaeroides).